We begin with the raw amino-acid sequence, 629 residues long: ATP-dependent RNA helicase DeaD (629 aa).

The Q motif motif lies at 6–34; it reads TTFADLGLKAPILEALNDLGYEKPSPIQA. In terms of domain architecture, Helicase ATP-binding spans 37 to 208; the sequence is IPHLLNGRDV…RRFMKEPQEV (172 aa). 50–57 provides a ligand contact to ATP; it reads AQTGSGKT. The DEAD box motif lies at 156–159; sequence DEAD. Residues 232–379 form the Helicase C-terminal domain; that stretch reads KNEALVRFLE…EVELPNAELL (148 aa). Disordered stretches follow at residues 438–481 and 560–629; these read LIVP…RERR and LGDA…GGDA. Basic and acidic residues-rich tracts occupy residues 446-481 and 568-629; these read MRPK…RERR and GGER…GGDA.

The protein belongs to the DEAD box helicase family. DeaD/CsdA subfamily. As to quaternary structure, interacts with the 50S ribosomal subunit upon shifting to 15 degrees Celsius. Also found associated with the RNA degradosome at 15 degrees Celsius; binds RNase E (rne).

It is found in the cytoplasm. It carries out the reaction ATP + H2O = ADP + phosphate + H(+). DEAD-box RNA helicase involved in various cellular processes at low temperature, including ribosome biogenesis, mRNA degradation and translation initiation. Exhibits RNA-stimulated ATP hydrolysis and RNA unwinding activity at low temperature. Involved in 50S ribosomal subunit assembly, acting after SrmB, and could also play a role in the biogenesis of the 30S ribosomal subunit. In addition, is involved in mRNA decay, via formation of a cold-shock degradosome with RNase E. Also stimulates translation of some mRNAs, probably at the level of initiation. This is ATP-dependent RNA helicase DeaD from Escherichia coli (strain K12).